A 942-amino-acid polypeptide reads, in one-letter code: Protein inturned (942 aa).

2 disordered regions span residues 1–56 (MAGL…PEWL) and 128–156 (LPRRHHKKSSSNNGPVSILKHQSSQKTGV). A compositionally biased stretch (acidic residues) spans 22-32 (SQEEEEEEGDS). Residues 33-48 (DAGASSLGSYSSASSD) are compositionally biased toward low complexity. Positions 137 to 156 (SSNNGPVSILKHQSSQKTGV) are enriched in polar residues. One can recognise a PDZ domain in the interval 185–267 (LLEVLVGIIH…PMQVKLTFEN (83 aa)). A phosphoserine mark is found at serine 674 and serine 678. The disordered stretch occupies residues 707-751 (KARKPSPSRIGGGREPTEGEESAGLSPHATPDAVRKQRESEGSDD).

Belongs to the inturned family. As to quaternary structure, component of the CPLANE (ciliogenesis and planar polarity effectors) complex, composed of INTU, FUZ and WDPCP. Interacts with CPLANE1. Interacts with NPHP4 and DAAM1; INTU is mediating the interaction between NPHP4 and DAAM1. As to expression, widely expressed in E8.5 and E9.5 wild type embryos. Present in various adult organs (at protein level).

It localises to the cytoplasm. It is found in the cell surface. The protein resides in the cytoskeleton. The protein localises to the cilium basal body. Its subcellular location is the microtubule organizing center. It localises to the centrosome. It is found in the centriole. Its function is as follows. Plays a key role in ciliogenesis and embryonic development. Regulator of cilia formation by controlling the organization of the apical actin cytoskeleton and the positioning of the basal bodies at the apical cell surface, which in turn is essential for the normal orientation of elongating ciliary microtubules. Plays a key role in definition of cell polarity via its role in ciliogenesis but not via conversion extension. Has an indirect effect on hedgehog signaling. Proposed to function as core component of the CPLANE (ciliogenesis and planar polarity effectors) complex involved in the recruitment of peripheral IFT-A proteins to basal bodies. Required for recruitment of CPLANE2 to the mother centriole. Binds phosphatidylinositol 3-phosphate with highest affinity, followed by phosphatidylinositol 4-phosphate and phosphatidylinositol 5-phosphate. In Mus musculus (Mouse), this protein is Protein inturned (Intu).